The primary structure comprises 220 residues: 3-keto-L-gulonate-6-phosphate decarboxylase SgbH (220 aa).

Substrate is bound at residue Asp11. 2 residues coordinate Mg(2+): Glu33 and Asp62. Arg192 serves as a coordination point for substrate.

This sequence belongs to the HPS/KGPDC family. KGPDC subfamily. In terms of assembly, homodimer. Mg(2+) is required as a cofactor.

The catalysed reaction is 3-dehydro-L-gulonate 6-phosphate + H(+) = L-xylulose 5-phosphate + CO2. In terms of biological role, catalyzes the decarboxylation of 3-keto-L-gulonate-6-P into L-xylulose-5-P. May be involved in the utilization of 2,3-diketo-L-gulonate. The chain is 3-keto-L-gulonate-6-phosphate decarboxylase SgbH (sgbH) from Escherichia coli (strain K12).